A 261-amino-acid polypeptide reads, in one-letter code: Small ribosomal subunit protein mS23 (261 aa).

The interval 234 to 261 (NPSESWATDEKDPKKNDDIEEDVEEIKL) is disordered. A compositionally biased stretch (basic and acidic residues) spans 241–250 (TDEKDPKKND). A compositionally biased stretch (acidic residues) spans 251-261 (DIEEDVEEIKL).

The protein belongs to the mitochondrion-specific ribosomal protein mS23 family. As to quaternary structure, component of the mitochondrial small ribosomal subunit.

The protein resides in the mitochondrion. This is Small ribosomal subunit protein mS23 (RSM25) from Vanderwaltozyma polyspora (strain ATCC 22028 / DSM 70294 / BCRC 21397 / CBS 2163 / NBRC 10782 / NRRL Y-8283 / UCD 57-17) (Kluyveromyces polysporus).